The following is a 112-amino-acid chain: Small ribosomal subunit protein bS16 (112 aa).

It belongs to the bacterial ribosomal protein bS16 family.

This chain is Small ribosomal subunit protein bS16, found in Aquifex aeolicus (strain VF5).